The chain runs to 372 residues: Glycerophosphodiester phosphodiesterase GDPD6 (372 aa).

The signal sequence occupies residues 1 to 21; that stretch reads MAFKYLLPLLLLSLLVANCAS. Residues 32 to 58 are disordered; that stretch reads KHATKKPLQTSRPYNLAHRGSNGELPE. Positions 44–362 constitute a GP-PDE domain; sequence PYNLAHRGSN…DFTGSLHNYQ (319 aa). Residues asparagine 120, asparagine 239, and asparagine 260 are each glycosylated (N-linked (GlcNAc...) asparagine).

Belongs to the glycerophosphoryl diester phosphodiesterase family. In terms of tissue distribution, expressed in flowers and siliques.

It catalyses the reaction a sn-glycero-3-phosphodiester + H2O = an alcohol + sn-glycerol 3-phosphate + H(+). The protein is Glycerophosphodiester phosphodiesterase GDPD6 of Arabidopsis thaliana (Mouse-ear cress).